Here is a 355-residue protein sequence, read N- to C-terminus: MAQPTFFQSPPPMTLAAIAAKAKAELADVSQGDKVIKGLAALDEAGPMHLAFFDNLKYADQLARTNAGACLVSPRFEARVPGHVVVVRANQPFRAFVQLAREFHADALRPQPWFGDDGISPQAIIDPTARLEDGVIVEPLAVIGAHVEIGAGTIVGAGAVIGPHVKVGRDCNVGARTVIQCSLIGNDVLIHPGCSIGQDGYGFIFFGANGHTKVPQTGRVIIQNHVEVGAGTTIDRGSLRDTVIGEGTKIDNQVQIGHNVTIGRHCLLAAQIGLAGSLTIGDNVALGAKVGINNHLTIGDGAQVTAMSGVKDDIPPNGRWGGFFAKPTKQWFREIVAVERLVRDQTATSRDEGRE.

The active-site Proton acceptor is the His258.

It belongs to the transferase hexapeptide repeat family. LpxD subfamily. As to quaternary structure, homotrimer.

The enzyme catalyses a UDP-3-O-[(3R)-3-hydroxyacyl]-alpha-D-glucosamine + a (3R)-hydroxyacyl-[ACP] = a UDP-2-N,3-O-bis[(3R)-3-hydroxyacyl]-alpha-D-glucosamine + holo-[ACP] + H(+). Its pathway is bacterial outer membrane biogenesis; LPS lipid A biosynthesis. Catalyzes the N-acylation of UDP-3-O-acylglucosamine using 3-hydroxyacyl-ACP as the acyl donor. Is involved in the biosynthesis of lipid A, a phosphorylated glycolipid that anchors the lipopolysaccharide to the outer membrane of the cell. The polypeptide is UDP-3-O-acylglucosamine N-acyltransferase (Bradyrhizobium sp. (strain ORS 278)).